A 219-amino-acid polypeptide reads, in one-letter code: Orotate phosphoribosyltransferase (219 aa).

K26 provides a ligand contact to 5-phospho-alpha-D-ribose 1-diphosphate. 34 to 35 provides a ligand contact to orotate; the sequence is FF. Residues 72–73, R98, K99, K102, H104, and 124–132 contribute to the 5-phospho-alpha-D-ribose 1-diphosphate site; these read YK and DDVITAGTA. T128 and R156 together coordinate orotate.

It belongs to the purine/pyrimidine phosphoribosyltransferase family. PyrE subfamily. In terms of assembly, homodimer. Mg(2+) is required as a cofactor.

It catalyses the reaction orotidine 5'-phosphate + diphosphate = orotate + 5-phospho-alpha-D-ribose 1-diphosphate. It functions in the pathway pyrimidine metabolism; UMP biosynthesis via de novo pathway; UMP from orotate: step 1/2. Functionally, catalyzes the transfer of a ribosyl phosphate group from 5-phosphoribose 1-diphosphate to orotate, leading to the formation of orotidine monophosphate (OMP). The chain is Orotate phosphoribosyltransferase from Xanthomonas euvesicatoria pv. vesicatoria (strain 85-10) (Xanthomonas campestris pv. vesicatoria).